The chain runs to 363 residues: Probable L-tyrosine/L-aspartate decarboxylase (363 aa).

Lys-208 bears the N6-(pyridoxal phosphate)lysine mark.

This sequence belongs to the group II decarboxylase family. MfnA subfamily. It depends on pyridoxal 5'-phosphate as a cofactor.

It carries out the reaction L-tyrosine + H(+) = tyramine + CO2. The enzyme catalyses L-aspartate + H(+) = beta-alanine + CO2. The protein operates within cofactor biosynthesis; methanofuran biosynthesis. It participates in cofactor biosynthesis; coenzyme A biosynthesis. Catalyzes the decarboxylation of L-tyrosine to produce tyramine for methanofuran biosynthesis. Can also catalyze the decarboxylation of L-aspartate to produce beta-alanine for coenzyme A (CoA) biosynthesis. The chain is Probable L-tyrosine/L-aspartate decarboxylase from Methanothermobacter thermautotrophicus (strain ATCC 29096 / DSM 1053 / JCM 10044 / NBRC 100330 / Delta H) (Methanobacterium thermoautotrophicum).